A 449-amino-acid polypeptide reads, in one-letter code: Guanine nucleotide-binding protein alpha-2 subunit (449 aa).

Residues 1–91 (MGLCASSEKN…TATANTSGSQ (91 aa)) form a disordered region. Gly-2 carries the N-myristoyl glycine lipid modification. Residue Cys-4 is the site of S-palmitoyl cysteine attachment. Composition is skewed to polar residues over residues 7-23 (SEKN…SAGS) and 38-48 (QKTVRTVNTAN). Over residues 49 to 59 (QQEKQQQRQQQ) the composition is skewed to low complexity. Positions 72-91 (NGSINNAISPTATANTSGSQ) are enriched in polar residues. A G-alpha domain is found at 122 to 448 (KELKVLLLGA…ENTLKDSGVL (327 aa)). The interval 125 to 138 (KVLLLGAGESGKST) is G1 motif. Residues Glu-133, Ser-134, Gly-135, Lys-136, Ser-137, Thr-138, Asp-245, Leu-270, Thr-276, Gly-299, Asn-365, Lys-366, Asp-368, and Ala-420 each contribute to the GTP site. Ser-137 provides a ligand contact to Mg(2+). The interval 268–276 (DILRSRQMT) is G2 motif. Thr-276 is a Mg(2+) binding site. Residues 292–301 (MHIYDVGGQR) are G3 motif. The segment at 361–368 (VLFLNKID) is G4 motif. Residues 418-423 (TQATDT) are G5 motif.

Belongs to the G-alpha family. G(q) subfamily. G proteins are composed of 3 units; alpha, beta and gamma. The alpha chain contains the guanine nucleotide binding site. GPA2 interacts with the kelch repeat beta-mimic proteins GPB1 and GPB2 and with the gamma subunit GPG1. Interacts with the G protein coupled receptor GPR1. Also interacts with regulators of G protein signaling (RGS) protein RGS2. Mg(2+) serves as cofactor. Myristoylation at Gly-2 and palmitoylation at Cys-4 are required for membrane localization and function of the protein.

It localises to the cell membrane. Alternates between an inactive form bound to GDP and an active form bound to GTP. Activated by the G protein coupled receptor (GPCR) GPR1, which serves as a guanine nucleotide-exchange factor (GEF), and inactivated by RGS2, acting as a GTPase-activating protein (GAP) for GPA2. In terms of biological role, alpha subunit of the heterotrimeric guanine nucleotide-binding protein (G protein) involved in glucose-induced cAMP signaling. Binds to its cognate transmembrane receptor GPR1, which senses extracellular carbon sources, and activates cAMP-PKA signaling and governs diploid pseudohyphal differentiation and haploid invasive growth. The G protein beta-mimic proteins GPB1 and GPB2 inhibit GPA2-GPR1 coupling, probably to reduce signaling in the absence of glucose. The protein is Guanine nucleotide-binding protein alpha-2 subunit (GPA2) of Saccharomyces cerevisiae (strain ATCC 204508 / S288c) (Baker's yeast).